A 338-amino-acid chain; its full sequence is Large ribosomal subunit protein uL3 (338 aa).

Residues 1 to 37 form a disordered region; sequence MPQPSRPRKGSMGFSPRKRAESEVPRIRSWASNDGAP.

Belongs to the universal ribosomal protein uL3 family. In terms of assembly, part of the 50S ribosomal subunit. Forms a cluster with proteins L14 and L24e.

Functionally, one of the primary rRNA binding proteins, it binds directly near the 3'-end of the 23S rRNA, where it nucleates assembly of the 50S subunit. The protein is Large ribosomal subunit protein uL3 of Haloquadratum walsbyi (strain DSM 16790 / HBSQ001).